The following is a 342-amino-acid chain: Trace amine-associated receptor 8 (342 aa).

Residues 1 to 31 lie on the Extracellular side of the membrane; that stretch reads MTSNFSQPVVQLCYEDVNGSCIETPYSPGSR. N-linked (GlcNAc...) asparagine glycosylation is found at Asn4 and Asn18. 2 cysteine pairs are disulfide-bonded: Cys21/Cys185 and Cys104/Cys189. The chain crosses the membrane as a helical span at residues 32 to 52; that stretch reads VILYTAFSFGSLLAVFGNLLV. At 53–67 the chain is on the cytoplasmic side; it reads MTSVLHFKQLHSPTN. A helical transmembrane segment spans residues 68–88; the sequence is FLIASLACADFLVGVTVMLFS. Residues 89 to 111 are Extracellular-facing; it reads MVRTVESCWYFGAKFCTLHSCCD. The helical transmembrane segment at 112 to 132 threads the bilayer; it reads VAFCYSSVLHLCFICIDRYIV. The Cytoplasmic segment spans residues 133–146; sequence VTDPLVYATKFTVS. Residues 147–167 traverse the membrane as a helical segment; the sequence is VSGICISVSWILPLTYSGAVF. At 168–195 the chain is on the extracellular side; it reads YTGVNDDGLEELVSALNCVGGCQIIVSQ. A helical membrane pass occupies residues 196–216; that stretch reads GWVLIDFLLFFIPTLVMIILY. At 217 to 258 the chain is on the cytoplasmic side; sequence SKIFLIAKQQAIKIETTSSKVESSSESYKIRVAKRERKAAKT. A helical transmembrane segment spans residues 259–279; it reads LGVTVLAFVISWLPYTVDILI. Position 280 (Asp280) is a topological domain, extracellular. Residues 281-301 form a helical membrane-spanning segment; that stretch reads AFMGFLTPAYIYEICCWSAYY. The Cytoplasmic portion of the chain corresponds to 302-342; that stretch reads NSAMNPLIYALFYPWFRKAIKLILSGDVLKASSSTISLFLE.

It belongs to the G-protein coupled receptor 1 family. Expressed in kidney and amygdala. Not expressed in other tissues or brain regions tested.

The protein localises to the cell membrane. Functionally, olfactory receptor specific for trace amines. Trace amine compounds are enriched in animal body fluids and act on trace amine-associated receptors (TAARs) to elicit both intraspecific and interspecific innate behaviors. Ligand-binding causes a conformation change that triggers signaling via G alpha proteins, possibly G(i)/G(o) G alpha proteins. The protein is Trace amine-associated receptor 8 (TAAR8) of Homo sapiens (Human).